Consider the following 132-residue polypeptide: MARDSLSDAGLHFDELNKLRILDPDVSQQTTELKEECRDFVDKIGHFQKVVGGLIELVDELAKETENEKMKAIGARNLLKSIAKQREAQQQQLYALIAEKKMQLERYRIEYDALCKVEAEQNEFIDQFNLQK.

The stretch at 87 to 112 (EAQQQQLYALIAEKKMQLERYRIEYD) forms a coiled coil.

The protein resides in the golgi apparatus. Its subcellular location is the cis-Golgi network. The protein localises to the cytoplasm. It is found in the cytoskeleton. It localises to the microtubule organizing center. The protein resides in the centrosome. Its subcellular location is the centriole. The protein localises to the cell projection. It is found in the cilium. Functionally, involved in ciliary process assembly. May play a role in the trafficking of ciliary membrane proteins from the Golgi complex to the cilium. Regulates the platelet-derived growth factor receptor-alpha (PDGFRA) signaling pathway. Plays an important role in spermatogenesis, particularly spermiogenesis, when germ cells form flagella. The sequence is that of Intraflagellar transport protein 20 homolog A (ift20-a) from Xenopus laevis (African clawed frog).